A 695-amino-acid chain; its full sequence is Centrosomal protein of 89 kDa (695 aa).

3 disordered regions span residues 24 to 54 (LIPA…RPRS), 66 to 147 (TGRT…GDED), and 167 to 272 (AVPL…SEVL). Positions 34-49 (PAVPRTPPPRSPNPSP) are enriched in pro residues. Acidic residues-rich tracts occupy residues 124–146 (DEDD…EGDE) and 178–189 (DSDVDEETEDSA). The span at 209–226 (GQTQPSSLPQPRSVSRRS) shows a compositional bias: polar residues. Over residues 251 to 271 (TNKESPVRVNERDRSSEDSEV) the composition is skewed to basic and acidic residues. Coiled coils occupy residues 276–368 (LEVQ…RYQA) and 406–632 (AYED…LEKE).

It is found in the cytoplasm. The protein resides in the cytosol. It localises to the cytoskeleton. Its subcellular location is the microtubule organizing center. The protein localises to the centrosome. It is found in the spindle pole. The protein resides in the centriole. It localises to the mitochondrion intermembrane space. Functionally, required for ciliogenesis. Also plays a role in mitochondrial metabolism where it may modulate complex IV activity. This is Centrosomal protein of 89 kDa (cep89) from Danio rerio (Zebrafish).